Reading from the N-terminus, the 194-residue chain is 3-isopropylmalate dehydratase small subunit (194 aa).

This sequence belongs to the LeuD family. LeuD type 1 subfamily. As to quaternary structure, heterodimer of LeuC and LeuD.

It catalyses the reaction (2R,3S)-3-isopropylmalate = (2S)-2-isopropylmalate. It participates in amino-acid biosynthesis; L-leucine biosynthesis; L-leucine from 3-methyl-2-oxobutanoate: step 2/4. In terms of biological role, catalyzes the isomerization between 2-isopropylmalate and 3-isopropylmalate, via the formation of 2-isopropylmaleate. In Halalkalibacterium halodurans (strain ATCC BAA-125 / DSM 18197 / FERM 7344 / JCM 9153 / C-125) (Bacillus halodurans), this protein is 3-isopropylmalate dehydratase small subunit.